A 457-amino-acid chain; its full sequence is Bifunctional protein GlmU (457 aa).

The tract at residues 1-236 (MDQDACTHSA…DWHFLGVNTP (236 aa)) is pyrophosphorylase. Residues 14–17 (LAAG), Lys28, Gln79, and 84–85 (GT) contribute to the UDP-N-acetyl-alpha-D-glucosamine site. Asp110 lines the Mg(2+) pocket. UDP-N-acetyl-alpha-D-glucosamine is bound by residues Gly145, Glu159, Asn176, and Asn234. Asn234 is a binding site for Mg(2+). Positions 237-257 (KDLSYVESIQQAFIIEKLLQS) are linker. Residues 258–457 (GVIIHSPESV…GKQKNFSKRK (200 aa)) are N-acetyltransferase. Positions 340 and 358 each coordinate UDP-N-acetyl-alpha-D-glucosamine. His370 functions as the Proton acceptor in the catalytic mechanism. 2 residues coordinate UDP-N-acetyl-alpha-D-glucosamine: Tyr373 and Asn384. Acetyl-CoA is bound by residues Ala387, 393-394 (NY), Ser412, Ala430, and Arg447.

It in the N-terminal section; belongs to the N-acetylglucosamine-1-phosphate uridyltransferase family. The protein in the C-terminal section; belongs to the transferase hexapeptide repeat family. In terms of assembly, homotrimer. Requires Mg(2+) as cofactor.

It is found in the cytoplasm. The catalysed reaction is alpha-D-glucosamine 1-phosphate + acetyl-CoA = N-acetyl-alpha-D-glucosamine 1-phosphate + CoA + H(+). It catalyses the reaction N-acetyl-alpha-D-glucosamine 1-phosphate + UTP + H(+) = UDP-N-acetyl-alpha-D-glucosamine + diphosphate. It functions in the pathway nucleotide-sugar biosynthesis; UDP-N-acetyl-alpha-D-glucosamine biosynthesis; N-acetyl-alpha-D-glucosamine 1-phosphate from alpha-D-glucosamine 6-phosphate (route II): step 2/2. Its pathway is nucleotide-sugar biosynthesis; UDP-N-acetyl-alpha-D-glucosamine biosynthesis; UDP-N-acetyl-alpha-D-glucosamine from N-acetyl-alpha-D-glucosamine 1-phosphate: step 1/1. The protein operates within bacterial outer membrane biogenesis; LPS lipid A biosynthesis. Its function is as follows. Catalyzes the last two sequential reactions in the de novo biosynthetic pathway for UDP-N-acetylglucosamine (UDP-GlcNAc). The C-terminal domain catalyzes the transfer of acetyl group from acetyl coenzyme A to glucosamine-1-phosphate (GlcN-1-P) to produce N-acetylglucosamine-1-phosphate (GlcNAc-1-P), which is converted into UDP-GlcNAc by the transfer of uridine 5-monophosphate (from uridine 5-triphosphate), a reaction catalyzed by the N-terminal domain. In Lawsonia intracellularis (strain PHE/MN1-00), this protein is Bifunctional protein GlmU.